Consider the following 221-residue polypeptide: uncharacterized protein (221 aa).

Transmembrane regions (helical) follow at residues 41–63, 78–100, 141–163, and 178–200; these read TGNI…HSLI, AVMY…SSLS, ILAY…ISFL, and LILR…VNLF.

It is found in the cell membrane. This is an uncharacterized protein from Archaeoglobus fulgidus (strain ATCC 49558 / DSM 4304 / JCM 9628 / NBRC 100126 / VC-16).